Reading from the N-terminus, the 364-residue chain is Lysophosphatidic acid receptor 1 (364 aa).

Residues 1 to 50 (MAAASTSSPVISQPQFTAMNEQQCFYNESIAFFYNRSGKYLATEWNTVSK) are Extracellular-facing. 2 disulfides stabilise this stretch: cysteine 24–cysteine 190 and cysteine 188–cysteine 195. Asparagine 27 and asparagine 35 each carry an N-linked (GlcNAc...) asparagine glycan. Lysine 39 serves as a coordination point for a 1-acyl-sn-glycero-3-phosphate. The chain crosses the membrane as a helical span at residues 51-75 (LVMGLGITVCVFIMLANLLVMVAIY). Residues 76-83 (VNRRFHFP) lie on the Cytoplasmic side of the membrane. Residues 84-107 (IYYLMANLAAADFFAGLAYFYLMF) traverse the membrane as a helical segment. Topologically, residues 108-121 (NTGPNTRRLTVSTW) are extracellular. Residues 122-144 (LLRQGLIDTSLTASVANLLAIAI) traverse the membrane as a helical segment. 124–129 (RQGLID) contributes to the a 1-acyl-sn-glycero-3-phosphate binding site. At 145-163 (ERHITVFRMQLHTRMSNRR) the chain is on the cytoplasmic side. The helical transmembrane segment at 164 to 184 (VVVVIVVIWTMAIVMGAIPSV) threads the bilayer. Residues 185 to 204 (GWNCICDIDHCSNMAPLYSD) are Extracellular-facing. The chain crosses the membrane as a helical span at residues 205–225 (SYLVFWAIFNLVTFVVMVVLY). Residue tryptophan 210 participates in a 1-acyl-sn-glycero-3-phosphate binding. Residues 226 to 255 (AHIFGYVRQRTMRMSRHSSGPRRNRDTMMS) are Cytoplasmic-facing. Residues 256-280 (LLKTVVIVLGAFIVCWTPGLVLLLL) form a helical membrane-spanning segment. At 281–294 (DVCCPQCDVLAYEK) the chain is on the extracellular side. A disulfide bridge connects residues cysteine 284 and cysteine 287. The helical transmembrane segment at 295 to 315 (FFLLLAEFNSAMNPIIYSYRD) threads the bilayer. Over 316–364 (KEMSATFRQILCCQRNENPNGPTEGSDRSASSLNHTILAGVHSNDHSVV) the chain is Cytoplasmic. A Phosphoserine modification is found at serine 341. Position 351 is a phosphothreonine (threonine 351).

Belongs to the G-protein coupled receptor 1 family. As to quaternary structure, interacts with RALA and GRK2. Interacts with GNAQ and GNA13. Interacts with CD14; the interaction is enhanced by exposure to bacterial lipopolysaccharide (LPS). N-glycosylated. Detected in lung. Detected in oligodendrocytes in corpus callosum in brain cortex (at protein level). Expressed within the embryonic cerebral cortex, where it is enriched in the ventricular zone. In the adult brain, also expressed in oligodendrocytes, as well as Schwann cells of the peripheral nervous system. Expressed in many other tissues, including lung, heart, intestine, spleen, thymus, and stomach. No expression in liver. Detected in kidney and testis. Detected in embryonic fibroblasts. Detected in adult lung fibroblasts and lung endothelial cells. Detected in dorsal root ganglion and dorsal root. Detected in astrocytes. Detected in bone.

It localises to the cell surface. Its subcellular location is the cell membrane. The protein resides in the endosome. Receptor for lysophosphatidic acid (LPA). Plays a role in the reorganization of the actin cytoskeleton, cell migration, differentiation and proliferation, and thereby contributes to the responses to tissue damage and infectious agents. Activates downstream signaling cascades via the G(i)/G(o), G(12)/G(13), and G(q) families of heteromeric G proteins. Signaling inhibits adenylyl cyclase activity and decreases cellular cAMP levels. Signaling triggers an increase of cytoplasmic Ca(2+) levels. Activates RALA; this leads to the activation of phospholipase C (PLC) and the formation of inositol 1,4,5-trisphosphate. Signaling mediates activation of down-stream MAP kinases. Contributes to the regulation of cell shape. Promotes Rho-dependent reorganization of the actin cytoskeleton in neuronal cells and neurite retraction. Promotes the activation of Rho and the formation of actin stress fibers. Promotes formation of lamellipodia at the leading edge of migrating cells via activation of RAC1. Through its function as LPA receptor, plays a role in chemotaxis and cell migration, including responses to injury and wounding. Plays a role in triggering inflammation in response to bacterial lipopolysaccharide (LPS) via its interaction with CD14. Promotes cell proliferation in response to LPA. Inhibits the intracellular ciliogenesis pathway in response to LPA and through AKT1 activation. Required for normal skeleton development. May play a role in osteoblast differentiation. Required for normal brain development. Required for normal proliferation, survival and maturation of newly formed neurons in the adult dentate gyrus. Plays a role in pain perception and in the initiation of neuropathic pain. The polypeptide is Lysophosphatidic acid receptor 1 (Lpar1) (Mus musculus (Mouse)).